The sequence spans 473 residues: Anthocyanidin-3-O-glucoside rhamnosyltransferase (473 aa).

It belongs to the UDP-glycosyltransferase family. Expressed in petals, styles and anthers.

The protein operates within pigment biosynthesis; anthocyanin biosynthesis. Functionally, controls the rhamnosylation of reddish anthocyanidin-3-O-glucosides, which is the first step in a series of modifications that finally yield magenta or blue/purple coloured anthocyanins. Controls the conversion of anthocyanidin-3-O-glucosides to anthocyanidin-3-O-rutinosides. This chain is Anthocyanidin-3-O-glucoside rhamnosyltransferase, found in Petunia hybrida (Petunia).